The chain runs to 241 residues: Ribosomal RNA small subunit methyltransferase G (241 aa).

S-adenosyl-L-methionine is bound by residues glycine 79, phenylalanine 84, 130–131 (AE), and arginine 150.

It belongs to the methyltransferase superfamily. RNA methyltransferase RsmG family.

Its subcellular location is the cytoplasm. In terms of biological role, specifically methylates the N7 position of a guanine in 16S rRNA. The chain is Ribosomal RNA small subunit methyltransferase G from Ligilactobacillus salivarius (strain UCC118) (Lactobacillus salivarius).